The primary structure comprises 72 residues: Translation initiation factor IF-1 (72 aa).

In terms of domain architecture, S1-like spans 1-72 (MAKQSAIEKD…SKGRIAFRYK (72 aa)).

The protein belongs to the IF-1 family. Component of the 30S ribosomal translation pre-initiation complex which assembles on the 30S ribosome in the order IF-2 and IF-3, IF-1 and N-formylmethionyl-tRNA(fMet); mRNA recruitment can occur at any time during PIC assembly.

It localises to the cytoplasm. Its function is as follows. One of the essential components for the initiation of protein synthesis. Stabilizes the binding of IF-2 and IF-3 on the 30S subunit to which N-formylmethionyl-tRNA(fMet) subsequently binds. Helps modulate mRNA selection, yielding the 30S pre-initiation complex (PIC). Upon addition of the 50S ribosomal subunit IF-1, IF-2 and IF-3 are released leaving the mature 70S translation initiation complex. The protein is Translation initiation factor IF-1 of Parabacteroides distasonis (strain ATCC 8503 / DSM 20701 / CIP 104284 / JCM 5825 / NCTC 11152).